A 696-amino-acid polypeptide reads, in one-letter code: Polyribonucleotide nucleotidyltransferase (696 aa).

Mg(2+)-binding residues include aspartate 486 and aspartate 492. The 60-residue stretch at proline 553 to valine 612 folds into the KH domain. The S1 motif domain occupies glycine 622–lysine 690.

This sequence belongs to the polyribonucleotide nucleotidyltransferase family. It depends on Mg(2+) as a cofactor.

Its subcellular location is the cytoplasm. It carries out the reaction RNA(n+1) + phosphate = RNA(n) + a ribonucleoside 5'-diphosphate. Its function is as follows. Involved in mRNA degradation. Catalyzes the phosphorolysis of single-stranded polyribonucleotides processively in the 3'- to 5'-direction. The sequence is that of Polyribonucleotide nucleotidyltransferase from Leptospira borgpetersenii serovar Hardjo-bovis (strain JB197).